The chain runs to 316 residues: 4-hydroxy-3-methylbut-2-enyl diphosphate reductase (316 aa).

Residue Cys18 participates in [4Fe-4S] cluster binding. Residues His47 and His80 each coordinate (2E)-4-hydroxy-3-methylbut-2-enyl diphosphate. Residues His47 and His80 each contribute to the dimethylallyl diphosphate site. Isopentenyl diphosphate-binding residues include His47 and His80. Cys102 provides a ligand contact to [4Fe-4S] cluster. Position 130 (His130) interacts with (2E)-4-hydroxy-3-methylbut-2-enyl diphosphate. A dimethylallyl diphosphate-binding site is contributed by His130. His130 is a binding site for isopentenyl diphosphate. Glu132 serves as the catalytic Proton donor. Thr171 provides a ligand contact to (2E)-4-hydroxy-3-methylbut-2-enyl diphosphate. Cys201 is a binding site for [4Fe-4S] cluster. (2E)-4-hydroxy-3-methylbut-2-enyl diphosphate-binding residues include Ser229, Ser230, Asn231, and Ser274. Dimethylallyl diphosphate is bound by residues Ser229, Ser230, Asn231, and Ser274. Residues Ser229, Ser230, Asn231, and Ser274 each coordinate isopentenyl diphosphate.

The protein belongs to the IspH family. The cofactor is [4Fe-4S] cluster.

It carries out the reaction isopentenyl diphosphate + 2 oxidized [2Fe-2S]-[ferredoxin] + H2O = (2E)-4-hydroxy-3-methylbut-2-enyl diphosphate + 2 reduced [2Fe-2S]-[ferredoxin] + 2 H(+). The catalysed reaction is dimethylallyl diphosphate + 2 oxidized [2Fe-2S]-[ferredoxin] + H2O = (2E)-4-hydroxy-3-methylbut-2-enyl diphosphate + 2 reduced [2Fe-2S]-[ferredoxin] + 2 H(+). The protein operates within isoprenoid biosynthesis; dimethylallyl diphosphate biosynthesis; dimethylallyl diphosphate from (2E)-4-hydroxy-3-methylbutenyl diphosphate: step 1/1. It functions in the pathway isoprenoid biosynthesis; isopentenyl diphosphate biosynthesis via DXP pathway; isopentenyl diphosphate from 1-deoxy-D-xylulose 5-phosphate: step 6/6. In terms of biological role, catalyzes the conversion of 1-hydroxy-2-methyl-2-(E)-butenyl 4-diphosphate (HMBPP) into a mixture of isopentenyl diphosphate (IPP) and dimethylallyl diphosphate (DMAPP). Acts in the terminal step of the DOXP/MEP pathway for isoprenoid precursor biosynthesis. The protein is 4-hydroxy-3-methylbut-2-enyl diphosphate reductase of Ruegeria sp. (strain TM1040) (Silicibacter sp.).